The sequence spans 690 residues: MGTTSDEMVSVEQTSSSSLNPLCFECGQQHWTRENHLYNYQNEVDDDLVCHICLQPLLQPLDTPCGHTFCYKCLRNFLQEKDFCPLDRKRLHFKLCKKSSILVHKLLDKLLVLCPFSSVCKDVMQRCDLEAHLKNRCPGASHRRVALERRKTSRTQAEIENENGPTLLDPAGTLSPEADCLGTGAVPVERHLTSASLSTWSEEPGLDNPAFEESAGADTTQQPLSLPEGEITTIEIHRSNPYIQLGISIVGGNETPLINIVIQEVYRDGVIARDGRLLAGDQILQVNNYNISNVSHNYARAVLSQPCNTLHLTVLRERRFGNRAHNHSDSNSPREEIFQVALHKRDSGEQLGIKLVRRTDEPGVFILDLLEGGLAAQDGRLSSNDRVLAINGHDLKYGTPELAAQIIQASGERVNLTIARPGKPQPGNTIREAGNHSSSSQHHTPPPYYSRPSSHKDLTQCVTCQEKHITVKKEPHESLGMTVAGGRGSKSGELPIFVTSVPPHGCLARDGRIKRGDVLLNINGIDLTNLSHSEAVAMLKASAASPAVALKALEVQIVEEATQNAEEQPSTFSENEYDASWSPSWVMWLGLPSTLHSCHDIVLRRSYLGSWGFSIVGGYEENHTNQPFFIKTIVLGTPAYYDGRLKCGDMIVAVNGLSTVGMSHSALVPMLKEQRNKVTLTVICWPGSLV.

Residues 50–88 form an RING-type zinc finger; that stretch reads CHICLQPLLQPLDTPCGHTFCYKCLRNFLQEKDFCPLDR. The interval 198–224 is disordered; it reads STWSEEPGLDNPAFEESAGADTTQQPL. An NPXY motif motif is present at residues 208–211; that stretch reads NPAF. 4 consecutive PDZ domains span residues 233 to 318, 339 to 422, 468 to 554, and 600 to 688; these read TIEI…LRER, QVAL…ARPG, HITV…KALE, and DIVL…WPGS. The segment at 418–455 is disordered; that stretch reads IARPGKPQPGNTIREAGNHSSSSQHHTPPPYYSRPSSH.

In terms of assembly, interacts with the phosphotyrosine interaction domain of NUMB.

The polypeptide is Ligand of Numb protein X 2 (LNX2) (Homo sapiens (Human)).